Reading from the N-terminus, the 408-residue chain is Phosphoglycerate kinase (408 aa).

Residues 24 to 26 (DLN), arginine 40, 63 to 66 (HLGR), arginine 122, and arginine 166 contribute to the substrate site. Residues lysine 216, glycine 304, glutamate 335, and 364–367 (GGDS) each bind ATP.

Belongs to the phosphoglycerate kinase family. Monomer.

The protein resides in the cytoplasm. The catalysed reaction is (2R)-3-phosphoglycerate + ATP = (2R)-3-phospho-glyceroyl phosphate + ADP. It functions in the pathway carbohydrate degradation; glycolysis; pyruvate from D-glyceraldehyde 3-phosphate: step 2/5. This chain is Phosphoglycerate kinase, found in Mycolicibacterium smegmatis (strain ATCC 700084 / mc(2)155) (Mycobacterium smegmatis).